The chain runs to 296 residues: Diheme cytochrome c-type (296 aa).

Residues Cys-52, Cys-55, His-56, Cys-202, Cys-205, and His-206 each coordinate heme c.

In terms of processing, binds 2 heme c groups covalently per subunit.

The protein resides in the cell membrane. In terms of biological role, particularly expressed when cells generate energy via aerobic respiration. The chain is Diheme cytochrome c-type (cycG) from Cereibacter sphaeroides (strain ATCC 17023 / DSM 158 / JCM 6121 / CCUG 31486 / LMG 2827 / NBRC 12203 / NCIMB 8253 / ATH 2.4.1.) (Rhodobacter sphaeroides).